Reading from the N-terminus, the 488-residue chain is GTPase Der (488 aa).

2 consecutive EngA-type G domains span residues 3–166 (PVVA…AEAM) and 199–372 (IKLA…DSAT). GTP contacts are provided by residues 9 to 16 (GRPNVGKS), 56 to 60 (DTGGI), 118 to 121 (NKVD), 205 to 212 (GKPNVGKS), 252 to 256 (DTAGV), and 317 to 320 (NKWD). The 85-residue stretch at 373–457 (RRVSTSMLTR…PIQLRFQEGD (85 aa)) folds into the KH-like domain. A disordered region spans residues 460–488 (FENKTEKLTMSQERRRKRAQSHIKDRKTK). A compositionally biased stretch (basic residues) spans 473–488 (RRRKRAQSHIKDRKTK).

It belongs to the TRAFAC class TrmE-Era-EngA-EngB-Septin-like GTPase superfamily. EngA (Der) GTPase family. As to quaternary structure, associates with the 50S ribosomal subunit.

GTPase that plays an essential role in the late steps of ribosome biogenesis. In Shewanella baltica (strain OS223), this protein is GTPase Der.